The primary structure comprises 318 residues: NADH-ubiquinone oxidoreductase chain 1 (318 aa).

8 helical membrane-spanning segments follow: residues 2–22, 70–90, 100–120, 136–156, 171–191, 231–251, 253–273, and 293–313; these read FFINILTLLVPILIAMAFLTL, LFIIAPTLSLTLALSLWVPLP, LGILFILATSSLSVYSILWSG, VAQTISYEVTMAIILLSVLLM, HMWLLLPAWPMAMMWFISTLA, IILMNALTTIIFLGPLYYINL, ELYSTNFMMEALLLSSTFLWI, and FLPLTLALCMWHISLPIFTAG.

The protein belongs to the complex I subunit 1 family. In terms of assembly, core subunit of respiratory chain NADH dehydrogenase (Complex I) which is composed of 45 different subunits.

The protein localises to the mitochondrion inner membrane. The enzyme catalyses a ubiquinone + NADH + 5 H(+)(in) = a ubiquinol + NAD(+) + 4 H(+)(out). Core subunit of the mitochondrial membrane respiratory chain NADH dehydrogenase (Complex I) which catalyzes electron transfer from NADH through the respiratory chain, using ubiquinone as an electron acceptor. Essential for the catalytic activity and assembly of complex I. The sequence is that of NADH-ubiquinone oxidoreductase chain 1 (Mtnd1) from Mus musculus (Mouse).